A 347-amino-acid chain; its full sequence is MSDMIHFDSSWDIRVTDTSLRDGSHHKRHQFTVEEVRAIVGALDGAGVPVIEVTHGDGLGGSSFNYGFSKTPEQELIKAAVETATNAKIAFLMLPGLGIKDDIVIAQDNGASICRIATHCTEADVSIQHFGLARERGLETVGFLMMAHSIPPEKLAKQARIMADAGCQCVYVVDSAGALVLEQVSDRVEALVQELGNDAQVGFHGHENLGLGVANSIAAVRAGAKQIDGSTRRFGAGAGNAPVEAFVGVCDKIGVKTGIDFFAIADAAEDVVRPAMPQECLLDRQALMMGYAGVYSSFLKHAERQAERYGVSSAELLVRAGKRKLVGGQEDQLIDIALELQREAAAS.

The Pyruvate carboxyltransferase domain occupies 13–265; it reads IRVTDTSLRD…KTGIDFFAIA (253 aa). 21 to 22 contacts substrate; that stretch reads RD. Asp-22 is a binding site for Mn(2+). His-25 (proton acceptor) is an active-site residue. Residues Ser-175 and His-204 each contribute to the substrate site. Mn(2+) is bound by residues His-204 and His-206. Tyr-295 contacts substrate.

The protein belongs to the 4-hydroxy-2-oxovalerate aldolase family.

It catalyses the reaction (S)-4-hydroxy-2-oxopentanoate = acetaldehyde + pyruvate. The polypeptide is 4-hydroxy-2-oxovalerate aldolase 1 (Rhodococcus erythropolis (strain PR4 / NBRC 100887)).